The sequence spans 529 residues: MTLKWTSVLLLIHLSCYFSSGSCGKVLVWAAEYSHWMNMKTILKELVQRGHEVTVLASSASILFDPNDASTLKFEVYPTSLTKTEFENIIMQQVKRWSDIRKDSFWLYFSQEQEILWELYDIFRNFCKDVVSNKKVMKKLQESRFDIVFADAVFPCGELLAALLNIRFVYSLRFTPGYTIERHSGGLIFPPSYIPIVMSKLSDQMTFMERVKNMIYVLYFDFWFQMSDMKKWDQFYSEVLGRPTTLFETMGKADIWLMRNSWSFQFPHPFLPNVDFVGGFHCKPAKPLPKEMEEFVQSSGENGVVVFSLGSVISNMTAERANVIATALAKIPQKVLWRFDGNKPDALGLNTRLYKWIPQNDLLGHPKTRAFITHGGANGIYEAIYHGIPMVGIPLFFDQPDNIAHMKAKGAAVRLDFNTMSSTDLLNALKTVINDPLYKENIMKLSRIQHDQPVKPLDRAVFWIEFVMPHKGAKHLRVAAHDLTWFQYHSLDVIGFLLACVATVIFIITKFCLFCFWKFARKGKKGKRD.

Residues 1–21 (MTLKWTSVLLLIHLSCYFSSG) form the signal peptide. Lys135 carries the post-translational modification N6-succinyllysine. The N-linked (GlcNAc...) asparagine glycan is linked to Asn315. The chain crosses the membrane as a helical span at residues 493–513 (VIGFLLACVATVIFIITKFCL).

The protein belongs to the UDP-glycosyltransferase family. In terms of tissue distribution, widely expressed.

Its subcellular location is the microsome membrane. The protein localises to the endoplasmic reticulum membrane. It catalyses the reaction glucuronate acceptor + UDP-alpha-D-glucuronate = acceptor beta-D-glucuronoside + UDP + H(+). UDPGT is of major importance in the conjugation and subsequent elimination of potentially toxic xenobiotics and endogenous compounds. The polypeptide is UDP-glucuronosyltransferase 2B11 (UGT2B11) (Homo sapiens (Human)).